The chain runs to 261 residues: Hydroxylase cctR (261 aa).

A helical transmembrane segment spans residues 38–58 (VFVSLLILSNTISFGLLGWIG). Asparagine 95 carries N-linked (GlcNAc...) asparagine glycosylation. Short sequence motifs (HXXHC) lie at residues 146–150 (HEIHC) and 176–180 (HIAHC).

Belongs to the ustYa family.

It is found in the membrane. Its pathway is mycotoxin biosynthesis. Hydroxylase; part of the gene cluster that mediates the biosynthesis of the mycotoxin cyclochlorotine, a hepatotoxic and carcinogenic cyclic chlorinated pentapeptide. Within the pathway, cctR performs the last step by hydroxylating cyclochlorotine to yield hydroxycyclochlorotine. The NRPS cctN initially catalyzes the condensation of L-serine (Ser), Pro, L-2-aminobutyrate (2Abu), Ser, and beta-Phe in this order to produce isocyclotine. After the dichlorination of Pro2 catalyzed by cctP2 to produce isocyclochlorotine, the cctO-mediated transacylation of isocyclochlorotine can furnish cyclochlorotine. The subsequent hydroxylation of cyclochlorotine by cctR yields hydroxycyclochlorotine as the final product. CctP1 probably acts as a phenylalanine aminomutase and provides the uncommon building block beta-Phe. Furthermore, 2Abu can be synthesized from threonine by one of the threonine dehydratases and transaminases localized outside of the cluster. The functions of the remaining proteins encoded by the cluster, cctM and cctT, have not been identified yet. The sequence is that of Hydroxylase cctR from Talaromyces islandicus (Penicillium islandicum).